Consider the following 205-residue polypeptide: Cytochrome c oxidase subunit 2 (205 aa).

Positions 115, 150, 152, 154, 158, and 161 each coordinate Cu cation. Glutamate 152 contacts Mg(2+).

The protein belongs to the cytochrome c oxidase subunit 2 family. In terms of assembly, component of the cytochrome c oxidase (complex IV, CIV), a multisubunit enzyme composed of a catalytic core of 3 subunits and several supernumerary subunits. The complex exists as a monomer or a dimer and forms supercomplexes (SCs) in the inner mitochondrial membrane with ubiquinol-cytochrome c oxidoreductase (cytochrome b-c1 complex, complex III, CIII). Cu cation is required as a cofactor.

It localises to the mitochondrion inner membrane. It carries out the reaction 4 Fe(II)-[cytochrome c] + O2 + 8 H(+)(in) = 4 Fe(III)-[cytochrome c] + 2 H2O + 4 H(+)(out). Its function is as follows. Component of the cytochrome c oxidase, the last enzyme in the mitochondrial electron transport chain which drives oxidative phosphorylation. The respiratory chain contains 3 multisubunit complexes succinate dehydrogenase (complex II, CII), ubiquinol-cytochrome c oxidoreductase (cytochrome b-c1 complex, complex III, CIII) and cytochrome c oxidase (complex IV, CIV), that cooperate to transfer electrons derived from NADH and succinate to molecular oxygen, creating an electrochemical gradient over the inner membrane that drives transmembrane transport and the ATP synthase. Cytochrome c oxidase is the component of the respiratory chain that catalyzes the reduction of oxygen to water. Electrons originating from reduced cytochrome c in the intermembrane space (IMS) are transferred via the dinuclear copper A center (CU(A)) of subunit 2 and heme A of subunit 1 to the active site in subunit 1, a binuclear center (BNC) formed by heme A3 and copper B (CU(B)). The BNC reduces molecular oxygen to 2 water molecules using 4 electrons from cytochrome c in the IMS and 4 protons from the mitochondrial matrix. This chain is Cytochrome c oxidase subunit 2 (COII), found in Paramecium tetraurelia.